The primary structure comprises 1032 residues: Contactin-1a (1032 aa).

An N-terminal signal peptide occupies residues 1–31 (MIPEAFQPRAMKHTTTVLMLALSSRFWSVCA). 6 consecutive Ig-like C2-type domains span residues 46 to 139 (PVFE…ARVQ), 144 to 231 (DMFS…KSVF), 249 to 335 (PADI…THLY), 340 to 417 (PDWL…AELR), 423 to 510 (PSFQ…GSLS), and 515 to 612 (TKIT…AELV). 2 disulfide bridges follow: cysteine 70-cysteine 122 and cysteine 166-cysteine 219. Residues asparagine 119, asparagine 216, and asparagine 266 are each glycosylated (N-linked (GlcNAc...) asparagine). Cystine bridges form between cysteine 271–cysteine 319, cysteine 361–cysteine 401, and cysteine 446–cysteine 494. Residues asparagine 455, asparagine 467, asparagine 483, and asparagine 504 are each glycosylated (N-linked (GlcNAc...) asparagine). A disulfide bridge connects residues cysteine 536 and cysteine 596. N-linked (GlcNAc...) asparagine glycosylation occurs at asparagine 604. Fibronectin type-III domains follow at residues 619–718 (PPGG…TREA), 723–820 (APSD…SAQD), 825–918 (APII…TKKS), and 920–1015 (PSRP…APAP). Residues 699 to 729 (NTLGTGPPSEPSPKTTTREARPIVAPSDIGG) are disordered. A glycan (N-linked (GlcNAc...) asparagine) is linked at asparagine 879. The interval 907–926 (ASQRNRIYTKKSPPSRPPKI) is disordered. An N-linked (GlcNAc...) asparagine glycan is attached at asparagine 950. Glycine 1010 is lipidated: GPI-anchor amidated glycine. The propeptide at 1011–1032 (SAPAPALASALLLLPLLWTLML) is removed in mature form.

Belongs to the immunoglobulin superfamily. Contactin family. As to expression, expressed in brain.

Its subcellular location is the cell membrane. Its function is as follows. Mediates cell surface interactions during nervous system development. The chain is Contactin-1a (cntn1a) from Danio rerio (Zebrafish).